We begin with the raw amino-acid sequence, 1163 residues long: AF4/FMR2 family member 4 (1163 aa).

Residues 1–19 (MNREDRNVLRMKERERRNQ) show a composition bias toward basic and acidic residues. 4 disordered regions span residues 1 to 48 (MNRE…EDKL), 76 to 312 (AIPK…ASGD), 324 to 904 (THSW…PRRT), and 1034 to 1073 (NSYNNSQAPSPGLGSKAVGMPSPVSPKLSPGNSGNYSSGA). Polar residues predominate over residues 115–128 (PSTSQSQKRSSGLQ). At serine 120 the chain carries Phosphoserine. Low complexity-rich tracts occupy residues 129–148 (SGHSSQRTSAGSSSGTNSSG) and 177–194 (RSSSPGKPQAVSSLNSSH). Residues 198–217 (HGNDHHSKEHQRSKSPRDPD) are compositionally biased toward basic and acidic residues. Serine 212 is subject to Phosphoserine. 3 stretches are compositionally biased toward polar residues: residues 227-251 (PFSSGQHSTQSFPPSLMSKSNSMLQ), 273-285 (EHYSSQSHGNSMT), and 350-375 (KESQQSNFGTGEQKRYNPSKTSNGHQ). Phosphoserine is present on residues serine 387, serine 388, serine 389, and serine 392. Over residues 403-412 (PRSTPGSNSE) the composition is skewed to polar residues. Over residues 413-429 (PSHHNSEGADNSRDDSS) the composition is skewed to basic and acidic residues. A compositionally biased stretch (low complexity) spans 430–462 (SHSGSESSSGSDSESESSSSDSEANEPSQSASP). Phosphoserine occurs at positions 487, 490, and 491. Composition is skewed to polar residues over residues 488 to 501 (PASSVDSNIPSSQG), 510 to 528 (GTGNSYTDTSGPKETSSAT), and 549 to 560 (SPAQSDSTTQRR). Serine 549 bears the Phosphoserine mark. Residues 568–586 (KKAEKAAAEEPRGGLKIES) show a composition bias toward basic and acidic residues. Residue lysine 583 forms a Glycyl lysine isopeptide (Lys-Gly) (interchain with G-Cter in SUMO2) linkage. Residues 599-612 (SRHKAATKGSRKPN) show a composition bias toward basic residues. Positions 613 to 627 (IKKESKSSPRPTAEK) are enriched in basic and acidic residues. A Phosphoserine modification is found at serine 671. Residue threonine 674 is modified to Phosphothreonine. Serine 680, serine 694, serine 703, and serine 706 each carry phosphoserine. Tyrosine 712 carries the phosphotyrosine modification. 3 stretches are compositionally biased toward basic and acidic residues: residues 730-761 (PYKETEPPKGEKKNVPEKHTREAQKQASEKVS), 769-789 (KNEDDNRASESKKPKTEDKNS), and 799-811 (ESSKQSAAKEKDL). At serine 814 the chain carries Phosphoserine. The residue at position 822 (lysine 822) is an N6-acetyllysine. Phosphoserine occurs at positions 836, 1043, 1055, 1058, and 1062. Positions 836–862 (SQSSSLKSSSNSNKETSGSSKNSSSTS) are enriched in low complexity. A compositionally biased stretch (low complexity) spans 1062–1073 (SPGNSGNYSSGA).

This sequence belongs to the AF4 family. In terms of assembly, component of the super elongation complex (SEC), at least composed of EAF1, EAF2, CDK9, MLLT3/AF9, AFF (AFF1 or AFF4), the P-TEFb complex and ELL (ELL, ELL2 or ELL3). Interacts with ELL3; the interaction is direct. Interacts with ELL2; the interaction is direct and leads to stabilize ELL2 and prevent ELL2 ubiquitination and degradation. Post-translationally, dephosphorylated at Ser-549 by the PNUTS-PP1 complex, promoting RNA polymerase II transcription pause-release. In terms of tissue distribution, ubiquitously expressed. Strongly expressed in heart, placenta, skeletal muscle, pancreas and to a lower extent in brain.

Its subcellular location is the nucleus. It is found in the chromosome. Key component of the super elongation complex (SEC), a complex required to increase the catalytic rate of RNA polymerase II transcription by suppressing transient pausing by the polymerase at multiple sites along the DNA. In the SEC complex, AFF4 acts as a central scaffold that recruits other factors through direct interactions with ELL proteins (ELL, ELL2 or ELL3) and the P-TEFb complex. In case of infection by HIV-1 virus, the SEC complex is recruited by the viral Tat protein to stimulate viral gene expression. This is AF4/FMR2 family member 4 (AFF4) from Homo sapiens (Human).